The chain runs to 122 residues: Ubiquitin-related modifier 1 (122 aa).

Residues 33–48 are compositionally biased toward polar residues; sequence PSTVPADNNTSVTTKD. The disordered stretch occupies residues 33-52; the sequence is PSTVPADNNTSVTTKDAASP. G122 carries the post-translational modification 1-thioglycine. A Glycyl lysine isopeptide (Gly-Lys) (interchain with K-? in acceptor proteins) cross-link involves residue G122.

It belongs to the URM1 family. C-terminal thiocarboxylation occurs in 2 steps, it is first acyl-adenylated (-COAMP) via the hesA/moeB/thiF part of UBA4, then thiocarboxylated (-COSH) via the rhodanese domain of UBA4.

It localises to the cytoplasm. Its pathway is tRNA modification; 5-methoxycarbonylmethyl-2-thiouridine-tRNA biosynthesis. Acts as a sulfur carrier required for 2-thiolation of mcm(5)S(2)U at tRNA wobble positions of cytosolic tRNA(Lys), tRNA(Glu) and tRNA(Gln). Serves as sulfur donor in tRNA 2-thiolation reaction by being thiocarboxylated (-COSH) at its C-terminus by the MOCS3 homolog UBA4. The sulfur is then transferred to tRNA to form 2-thiolation of mcm(5)S(2)U. Prior mcm(5) tRNA modification by the elongator complex is required for 2-thiolation. Also acts as a ubiquitin-like protein (UBL) that is covalently conjugated via an isopeptide bond to lysine residues of target proteins such as AHP1. The thiocarboxylated form serves as substrate for conjugation and oxidative stress specifically induces the formation of UBL-protein conjugates. The chain is Ubiquitin-related modifier 1 from Laccaria bicolor (strain S238N-H82 / ATCC MYA-4686) (Bicoloured deceiver).